The sequence spans 116 residues: Large ribosomal subunit protein bL19 (116 aa).

Belongs to the bacterial ribosomal protein bL19 family.

Its function is as follows. This protein is located at the 30S-50S ribosomal subunit interface and may play a role in the structure and function of the aminoacyl-tRNA binding site. The sequence is that of Large ribosomal subunit protein bL19 from Pasteurella multocida (strain Pm70).